Reading from the N-terminus, the 224-residue chain is Pro-thyrotropin-releasing hormone-B (224 aa).

Residues 1–15 (MMFLWWLLLLGTAIS) form the signal peptide. Gln75 carries the pyrrolidone carboxylic acid modification. Pro77 bears the Proline amide mark. The segment covering 86–101 (EKRQHPGKRDLEDLQL) has biased composition (basic and acidic residues). Disordered regions lie at residues 86-131 (EKRQ…DWSR) and 150-212 (RQHP…NSGN). A Pyrrolidone carboxylic acid modification is found at Gln89. Proline amide is present on Pro91. The residue at position 105 (Gln105) is a Pyrrolidone carboxylic acid. Residue Pro107 is modified to Proline amide. Positions 110–129 (RYLEDMEKRQHPGKREEGDW) are enriched in basic and acidic residues. Gln119 carries the post-translational modification Pyrrolidone carboxylic acid. Residue Pro121 is modified to Proline amide. A Pyrrolidone carboxylic acid modification is found at Gln151. Pro153 is modified (proline amide). Pyrrolidone carboxylic acid is present on Gln166. A Proline amide modification is found at Pro168. The span at 182-199 (ENSKEVGKRQHPGKRYDP) shows a compositional bias: basic and acidic residues. A Pyrrolidone carboxylic acid modification is found at Gln191. Pro193 carries the proline amide modification.

Belongs to the TRH family.

Its subcellular location is the secreted. This chain is Pro-thyrotropin-releasing hormone-B (trh-b), found in Xenopus laevis (African clawed frog).